A 69-amino-acid polypeptide reads, in one-letter code: DNA-directed RNA polymerase subunit omega (69 aa).

It belongs to the RNA polymerase subunit omega family. As to quaternary structure, the RNAP catalytic core consists of 2 alpha, 1 beta, 1 beta' and 1 omega subunit. When a sigma factor is associated with the core the holoenzyme is formed, which can initiate transcription.

The enzyme catalyses RNA(n) + a ribonucleoside 5'-triphosphate = RNA(n+1) + diphosphate. Its function is as follows. Promotes RNA polymerase assembly. Latches the N- and C-terminal regions of the beta' subunit thereby facilitating its interaction with the beta and alpha subunits. This is DNA-directed RNA polymerase subunit omega from Pediococcus pentosaceus (strain ATCC 25745 / CCUG 21536 / LMG 10740 / 183-1w).